The chain runs to 89 residues: MSLSTEAKAKILADFGRCENDTGSTEVQVALLTAQINHLQAHFKEHIHDHHSRRGLLRMVSSRRKLTAYLKRTDLARYTALIQKLGLRR.

It belongs to the universal ribosomal protein uS15 family. As to quaternary structure, part of the 30S ribosomal subunit. Forms a bridge to the 50S subunit in the 70S ribosome, contacting the 23S rRNA.

Its function is as follows. One of the primary rRNA binding proteins, it binds directly to 16S rRNA where it helps nucleate assembly of the platform of the 30S subunit by binding and bridging several RNA helices of the 16S rRNA. In terms of biological role, forms an intersubunit bridge (bridge B4) with the 23S rRNA of the 50S subunit in the ribosome. This Shewanella baltica (strain OS185) protein is Small ribosomal subunit protein uS15.